Consider the following 56-residue polypeptide: Small ribosomal subunit protein uS14 (56 aa).

The Zn(2+) site is built by C21, C24, C39, and C42.

It belongs to the universal ribosomal protein uS14 family. Zn(2+) is required as a cofactor.

This chain is Small ribosomal subunit protein uS14 (RPS29), found in Debaryomyces hansenii (strain ATCC 36239 / CBS 767 / BCRC 21394 / JCM 1990 / NBRC 0083 / IGC 2968) (Yeast).